A 692-amino-acid chain; its full sequence is Glycogen phosphorylase (692 aa).

The residue at position 586 (K586) is an N6-(pyridoxal phosphate)lysine.

It belongs to the glycogen phosphorylase family. It depends on pyridoxal 5'-phosphate as a cofactor.

The enzyme catalyses [(1-&gt;4)-alpha-D-glucosyl](n) + phosphate = [(1-&gt;4)-alpha-D-glucosyl](n-1) + alpha-D-glucose 1-phosphate. Its function is as follows. Phosphorylase is an important allosteric enzyme in carbohydrate metabolism. Enzymes from different sources differ in their regulatory mechanisms and in their natural substrates. However, all known phosphorylases share catalytic and structural properties. This Aquifex aeolicus (strain VF5) protein is Glycogen phosphorylase (glgP).